Consider the following 271-residue polypeptide: MKDEKIAKKKLTINDIKNKKGAEPIVMITAYDALFAKIFDDYADVILVGDSLNMSFNMKESTLSADMSTMLYHTKAVCTGAKKSFILADMPFGSYTNEKQAIKNAMKFFKQTNADAVKLEVGMHQVNLVKRLCEEGINVMAHIGLKPQFFKFEGGYKIKGKSELEAKRLVEEALAFEQAGAFGILLEGTLSNVASEITRQVRVPVVGIGSGADVDGQVLVWSDMLGFFEDFKPKFVKRYLDGAALVRKGVQSYASEVKNKIFPSEEFSYKG.

Mg(2+)-binding residues include Asp-50 and Asp-89. Residues 50-51 (DS), Asp-89, and Lys-118 contribute to the 3-methyl-2-oxobutanoate site. Residue Glu-120 coordinates Mg(2+). The active-site Proton acceptor is the Glu-187.

It belongs to the PanB family. In terms of assembly, homodecamer; pentamer of dimers. Mg(2+) serves as cofactor.

The protein localises to the cytoplasm. It carries out the reaction 3-methyl-2-oxobutanoate + (6R)-5,10-methylene-5,6,7,8-tetrahydrofolate + H2O = 2-dehydropantoate + (6S)-5,6,7,8-tetrahydrofolate. It functions in the pathway cofactor biosynthesis; (R)-pantothenate biosynthesis; (R)-pantoate from 3-methyl-2-oxobutanoate: step 1/2. Catalyzes the reversible reaction in which hydroxymethyl group from 5,10-methylenetetrahydrofolate is transferred onto alpha-ketoisovalerate to form ketopantoate. This Campylobacter concisus (strain 13826) protein is 3-methyl-2-oxobutanoate hydroxymethyltransferase.